A 361-amino-acid chain; its full sequence is Molybdenum import ATP-binding protein ModC (361 aa).

Residues Met1–Asp235 enclose the ABC transporter domain. Gly33–Ser40 serves as a coordination point for ATP. Positions Gln296–Ala361 constitute a Mop domain.

The protein belongs to the ABC transporter superfamily. Molybdate importer (TC 3.A.1.8) family. As to quaternary structure, the complex is composed of two ATP-binding proteins (ModC), two transmembrane proteins (ModB) and a solute-binding protein (ModA).

The protein localises to the cell inner membrane. The catalysed reaction is molybdate(out) + ATP + H2O = molybdate(in) + ADP + phosphate + H(+). Its function is as follows. Part of the ABC transporter complex ModABC involved in molybdenum import. Responsible for energy coupling to the transport system. The protein is Molybdenum import ATP-binding protein ModC of Pseudomonas aeruginosa (strain ATCC 15692 / DSM 22644 / CIP 104116 / JCM 14847 / LMG 12228 / 1C / PRS 101 / PAO1).